The sequence spans 233 residues: Adenosine 5'-phosphosulfate reductase (233 aa).

[4Fe-4S] cluster is bound by residues Cys120, Cys121, Cys203, and Cys206. Cys229 (nucleophile; cysteine thiosulfonate intermediate) is an active-site residue.

This sequence belongs to the PAPS reductase family. CysH subfamily. [4Fe-4S] cluster is required as a cofactor.

It localises to the cytoplasm. The enzyme catalyses [thioredoxin]-disulfide + sulfite + AMP + 2 H(+) = adenosine 5'-phosphosulfate + [thioredoxin]-dithiol. It participates in sulfur metabolism; hydrogen sulfide biosynthesis; sulfite from sulfate. Its function is as follows. Catalyzes the formation of sulfite from adenosine 5'-phosphosulfate (APS) using thioredoxin as an electron donor. This chain is Adenosine 5'-phosphosulfate reductase, found in Bacillus pumilus (strain SAFR-032).